A 923-amino-acid polypeptide reads, in one-letter code: Rap guanine nucleotide exchange factor 3 (923 aa).

Serine 79 bears the Phosphoserine mark. The DEP domain maps to 110-186 (ATCPNLIRDR…RDAQFYRFPG (77 aa)). The interaction with PDE3B stretch occupies residues 218–242 (TVALRKPPGQRTDEELDLIFEELLH). Residues 311 to 314 (GQLA) and 321 to 322 (RA) contribute to the 3',5'-cyclic AMP site. An N-terminal Ras-GEF domain is found at 384-518 (NRYTVMSGTP…EQWPERRRCH (135 aa)). Residues 398–422 (ELLLEAMGPDSSAHDPTETFLSDFL) are interaction with PDE3B. Phosphoserine is present on residues serine 528 and serine 864. A Ras-GEF domain is found at 662–889 (SAKDLAGQLT…ARISTCSEQS (228 aa)).

In terms of assembly, interacts with PDE3B and PIK3R6; form a signaling complex that regulates phosphatidylinositol 3-kinase gamma in angiogenesis. As to expression, widely expressed with highest levels in adult kidney, heart, thyroid and brain, and fetal kidney.

Its subcellular location is the endomembrane system. In terms of biological role, guanine nucleotide exchange factor (GEF) for RAP1A and RAP2A small GTPases that is activated by binding cAMP. Through simultaneous binding of PDE3B to RAPGEF3 and PIK3R6 is assembled in a signaling complex in which it activates the PI3K gamma complex and which is involved in angiogenesis. Plays a role in the modulation of the cAMP-induced dynamic control of endothelial barrier function through a pathway that is independent on Rho-mediated signaling. Required for the actin rearrangement at cell-cell junctions, such as stress fibers and junctional actin. This chain is Rap guanine nucleotide exchange factor 3 (RAPGEF3), found in Homo sapiens (Human).